A 709-amino-acid polypeptide reads, in one-letter code: Fatty acid oxidation complex subunit alpha (709 aa).

Residues 1–188 (MEKTFNLTRR…KMGLVNDVVP (188 aa)) are enoyl-CoA hydratase. The 3-hydroxyacyl-CoA dehydrogenase stretch occupies residues 308–709 (RKVKKAVILG…EMAAEKTRFF (402 aa)).

The protein in the N-terminal section; belongs to the enoyl-CoA hydratase/isomerase family. It in the central section; belongs to the 3-hydroxyacyl-CoA dehydrogenase family. As to quaternary structure, heterotetramer of two alpha chains (FadJ) and two beta chains (FadI).

The protein localises to the cytoplasm. It carries out the reaction a (3S)-3-hydroxyacyl-CoA = a (2E)-enoyl-CoA + H2O. It catalyses the reaction a 4-saturated-(3S)-3-hydroxyacyl-CoA = a (3E)-enoyl-CoA + H2O. The enzyme catalyses a (3S)-3-hydroxyacyl-CoA + NAD(+) = a 3-oxoacyl-CoA + NADH + H(+). The catalysed reaction is (3S)-3-hydroxybutanoyl-CoA = (3R)-3-hydroxybutanoyl-CoA. Its pathway is lipid metabolism; fatty acid beta-oxidation. Functionally, catalyzes the formation of a hydroxyacyl-CoA by addition of water on enoyl-CoA. Also exhibits 3-hydroxyacyl-CoA epimerase and 3-hydroxyacyl-CoA dehydrogenase activities. The chain is Fatty acid oxidation complex subunit alpha from Shewanella sp. (strain MR-4).